The chain runs to 289 residues: Protoheme IX farnesyltransferase (289 aa).

A run of 9 helical transmembrane segments spans residues 9 to 29 (VALM…PVMM), 35 to 55 (MPSL…AGSA), 89 to 109 (LTFG…LVNW), 110 to 130 (PSAL…TLGL), 138 to 158 (IVIG…AVTG), 164 to 184 (AVLL…ALAM), 188 to 208 (DDYA…EVVT), 228 to 248 (VAHT…WFLA), and 269 to 289 (FHMS…TAVV).

Belongs to the UbiA prenyltransferase family. Protoheme IX farnesyltransferase subfamily.

Its subcellular location is the cell membrane. It catalyses the reaction heme b + (2E,6E)-farnesyl diphosphate + H2O = Fe(II)-heme o + diphosphate. It participates in porphyrin-containing compound metabolism; heme O biosynthesis; heme O from protoheme: step 1/1. Converts heme B (protoheme IX) to heme O by substitution of the vinyl group on carbon 2 of heme B porphyrin ring with a hydroxyethyl farnesyl side group. The chain is Protoheme IX farnesyltransferase from Frankia alni (strain DSM 45986 / CECT 9034 / ACN14a).